The primary structure comprises 228 residues: RNA pyrophosphohydrolase (228 aa).

Positions 1-70 are unknown; that stretch reads MEKRSGIGRL…KQWVKMMNDI (70 aa). The tract at residues 71–228 is rppH domain; it reads VIDKRGFRLG…VLTEFAEFIR (158 aa). Residues 76-221 enclose the Nudix hydrolase domain; sequence GFRLGVGMVI…KRDVYQKVLT (146 aa). The Nudix box motif lies at 109 to 130; that stretch reads GGLLPNETLREALNRELDEEVG.

The protein in the C-terminal section; belongs to the Nudix hydrolase family. RppH subfamily. A divalent metal cation serves as cofactor.

Its function is as follows. Accelerates the degradation of transcripts by removing pyrophosphate from the 5'-end of triphosphorylated RNA, leading to a more labile monophosphorylated state that can stimulate subsequent ribonuclease cleavage. The protein is RNA pyrophosphohydrolase of Coxiella burnetii (strain RSA 493 / Nine Mile phase I).